The following is a 544-amino-acid chain: CTP synthase (544 aa).

The amidoligase domain stretch occupies residues 1-267 (MAKFVFITGG…CREVLDVLDL (267 aa)). Ser-13 is a binding site for CTP. Residue Ser-13 participates in UTP binding. ATP is bound by residues 14–19 (SIGKGI) and Asp-71. Mg(2+) contacts are provided by Asp-71 and Glu-141. CTP is bound by residues 148 to 150 (DIE), 188 to 193 (KTKPTQ), and Lys-224. Residues 188 to 193 (KTKPTQ) and Lys-224 each bind UTP. The region spanning 292-534 (KVALVGKYIQ…IEAAQQRLPS (243 aa)) is the Glutamine amidotransferase type-1 domain. Residue Gly-354 coordinates L-glutamine. Catalysis depends on Cys-381, which acts as the Nucleophile; for glutamine hydrolysis. L-glutamine-binding positions include 382–385 (LGMQ), Glu-405, and Arg-462. Residues His-507 and Glu-509 contribute to the active site.

Belongs to the CTP synthase family. Homotetramer.

The catalysed reaction is UTP + L-glutamine + ATP + H2O = CTP + L-glutamate + ADP + phosphate + 2 H(+). The enzyme catalyses L-glutamine + H2O = L-glutamate + NH4(+). It catalyses the reaction UTP + NH4(+) + ATP = CTP + ADP + phosphate + 2 H(+). The protein operates within pyrimidine metabolism; CTP biosynthesis via de novo pathway; CTP from UDP: step 2/2. Allosterically activated by GTP, when glutamine is the substrate; GTP has no effect on the reaction when ammonia is the substrate. The allosteric effector GTP functions by stabilizing the protein conformation that binds the tetrahedral intermediate(s) formed during glutamine hydrolysis. Inhibited by the product CTP, via allosteric rather than competitive inhibition. Its function is as follows. Catalyzes the ATP-dependent amination of UTP to CTP with either L-glutamine or ammonia as the source of nitrogen. Regulates intracellular CTP levels through interactions with the four ribonucleotide triphosphates. This Parasynechococcus marenigrum (strain WH8102) protein is CTP synthase.